A 508-amino-acid polypeptide reads, in one-letter code: Lysine--tRNA ligase (508 aa).

Positions 418 and 425 each coordinate Mg(2+).

It belongs to the class-II aminoacyl-tRNA synthetase family. In terms of assembly, homodimer. Mg(2+) serves as cofactor.

The protein resides in the cytoplasm. The catalysed reaction is tRNA(Lys) + L-lysine + ATP = L-lysyl-tRNA(Lys) + AMP + diphosphate. This chain is Lysine--tRNA ligase, found in Burkholderia multivorans (strain ATCC 17616 / 249).